A 213-amino-acid polypeptide reads, in one-letter code: Thymidine kinase (213 aa).

ATP contacts are provided by residues 22 to 29 (GSMFSGKT) and 94 to 97 (DEAQ). E95 functions as the Proton acceptor in the catalytic mechanism. C151, C154, C183, and C186 together coordinate Zn(2+). Residues 185–213 (RCFQPPRPTSTSSLKAPAPAATAPRPELP) are disordered. The span at 193-213 (TSTSSLKAPAPAATAPRPELP) shows a compositional bias: low complexity.

Belongs to the thymidine kinase family. In terms of assembly, homotetramer.

It localises to the cytoplasm. It catalyses the reaction thymidine + ATP = dTMP + ADP + H(+). This Rhodothermus sp. (strain ITI 518) protein is Thymidine kinase.